A 106-amino-acid chain; its full sequence is Toxin-like structure LSTX-D9 (106 aa).

A signal peptide spans 1–20 (MMKVLVVVALLLTLIIYSSS). Positions 21–41 (DGIDDLEADELVSLMAHEQTR) are excised as a propeptide. 4 disulfides stabilise this stretch: C45–C60, C52–C69, C59–C85, and C71–C83.

The protein belongs to the neurotoxin 19 (CSTX) family. 02 (D7) subfamily. Expressed by the venom gland.

Its subcellular location is the secreted. The polypeptide is Toxin-like structure LSTX-D9 (Lycosa singoriensis (Wolf spider)).